The chain runs to 121 residues: Large ribosomal subunit protein bL20 (121 aa).

The protein belongs to the bacterial ribosomal protein bL20 family.

Its function is as follows. Binds directly to 23S ribosomal RNA and is necessary for the in vitro assembly process of the 50S ribosomal subunit. It is not involved in the protein synthesizing functions of that subunit. The sequence is that of Large ribosomal subunit protein bL20 from Methylorubrum populi (strain ATCC BAA-705 / NCIMB 13946 / BJ001) (Methylobacterium populi).